Consider the following 183-residue polypeptide: Large ribosomal subunit protein uL5 (183 aa).

Belongs to the universal ribosomal protein uL5 family. In terms of assembly, part of the 50S ribosomal subunit; part of the 5S rRNA/L5/L18/L25 subcomplex. Contacts the 5S rRNA and the P site tRNA. Forms a bridge to the 30S subunit in the 70S ribosome.

This is one of the proteins that bind and probably mediate the attachment of the 5S RNA into the large ribosomal subunit, where it forms part of the central protuberance. In the 70S ribosome it contacts protein S13 of the 30S subunit (bridge B1b), connecting the 2 subunits; this bridge is implicated in subunit movement. Contacts the P site tRNA; the 5S rRNA and some of its associated proteins might help stabilize positioning of ribosome-bound tRNAs. In Flavobacterium johnsoniae (strain ATCC 17061 / DSM 2064 / JCM 8514 / BCRC 14874 / CCUG 350202 / NBRC 14942 / NCIMB 11054 / UW101) (Cytophaga johnsonae), this protein is Large ribosomal subunit protein uL5.